A 313-amino-acid polypeptide reads, in one-letter code: Ribosomal RNA small subunit methyltransferase H (313 aa).

Residues 51–53 (GGH), Asp71, Phe98, Asp119, and Gln126 each bind S-adenosyl-L-methionine. A disordered region spans residues 293–313 (EEQRANPRSRSARLRVAERVS).

This sequence belongs to the methyltransferase superfamily. RsmH family.

It is found in the cytoplasm. It catalyses the reaction cytidine(1402) in 16S rRNA + S-adenosyl-L-methionine = N(4)-methylcytidine(1402) in 16S rRNA + S-adenosyl-L-homocysteine + H(+). Functionally, specifically methylates the N4 position of cytidine in position 1402 (C1402) of 16S rRNA. The polypeptide is Ribosomal RNA small subunit methyltransferase H (Roseiflexus sp. (strain RS-1)).